A 254-amino-acid chain; its full sequence is Ribosomal RNA small subunit methyltransferase J (254 aa).

S-adenosyl-L-methionine-binding positions include 107 to 108, 123 to 124, and aspartate 177; these read RD and ER.

This sequence belongs to the methyltransferase superfamily. RsmJ family.

It localises to the cytoplasm. The catalysed reaction is guanosine(1516) in 16S rRNA + S-adenosyl-L-methionine = N(2)-methylguanosine(1516) in 16S rRNA + S-adenosyl-L-homocysteine + H(+). Specifically methylates the guanosine in position 1516 of 16S rRNA. The protein is Ribosomal RNA small subunit methyltransferase J of Histophilus somni (strain 2336) (Haemophilus somnus).